Consider the following 1096-residue polypeptide: Protein EMBRYONIC FLOWER 1 (1096 aa).

8 disordered regions span residues 155–189 (KARGRPMGASNVRSKSRKLVSPEQVGNNRSKEKLN), 274–296 (KTSGGSNIRKEESALKKESVRGR), 315–348 (GATSENASKSCDSDQGNSESTDSGFDRTPFKGKQ), 366–420 (ETSQ…KKPV), 563–612 (LSRV…DIPM), 629–651 (DKEEDVSNKQPSQETAHKSKNAL), 1007–1032 (DKEKKQKRKAESCNNNASAGPVKNSS), and 1070–1096 (FKKKPAVCKQDAMKQTKKPVCPPTQNA). Short sequence motifs (nuclear localization signal) lie at residues 170 to 177 (SRKLVSPE) and 281 to 288 (IRKEESAL). Basic and acidic residues predominate over residues 281–294 (IRKEESALKKESVR). The segment covering 315–337 (GATSENASKSCDSDQGNSESTDS) has biased composition (polar residues). The tract at residues 337–617 (SGFDRTPFKG…DDIPMEIVEL (281 aa)) is DNA-binding. The segment covering 371–381 (GIKEHDADPSK) has biased composition (basic and acidic residues). Polar residues predominate over residues 382–394 (RSTPAHSLFTGND). Residues 572–601 (SGADRKGKTVMVQEHHGAPRSQSHDRKETT) are compositionally biased toward basic and acidic residues. The interval 866–1096 (LDPRLRSTTP…KPVCPPTQNA (231 aa)) is DNA-binding. A compositionally biased stretch (polar residues) spans 1018-1032 (SCNNNASAGPVKNSS). A Nuclear localization signal 3 motif is present at residues 1071–1078 (KKKPAVCK).

In terms of assembly, interacts with MSI1. As to expression, expressed in mature embryo, root tips, cotyledons, leaves, stems, shoot apex, and flower clusters, with highest levels in flowers. The presence in the shoot apical meristem (SAM) is required to maintain vegetative development and prevent early flowering.

The protein resides in the nucleus. Its function is as follows. Transcription repressor that regulates phase transition during shoot, flower and seeds development. Controls leaves development, shoot architecture and flowering by delaying both the vegetative to reproductive transition and flower initiation. Participates in polycomb group (PcG) protein complex-mediated (including EMF2) silencing of the flower homeotic genes AGAMOUS (AG), PISTILLATA (PI), and APETALA3 (AP3), as well as of some regulatory genes such as ABSCISIC ACID INSENSITIVE3 (ABI3), LONG VEGETATIVE PHASE1 (LOV1), and FLOWERING LOCUS C (FLC) during vegetative development. Required for histone methylation or for maintaining a stable histone methylation (e.g. H3K27me3) pattern of repressed target genes (including genes involved in salt stress response and flower development); this repression is counteracted by ULT1. Can bind non specifically DNA (both double- and single-stranded) and RNA. The chain is Protein EMBRYONIC FLOWER 1 from Arabidopsis thaliana (Mouse-ear cress).